Here is a 221-residue protein sequence, read N- to C-terminus: Small ribosomal subunit protein uS3 (221 aa).

The KH type-2 domain maps to 39-107 (IREYIKRKLY…QVHVNIVEVK (69 aa)).

The protein belongs to the universal ribosomal protein uS3 family. Part of the 30S ribosomal subunit. Forms a tight complex with proteins S10 and S14.

Binds the lower part of the 30S subunit head. Binds mRNA in the 70S ribosome, positioning it for translation. This is Small ribosomal subunit protein uS3 from Desulforamulus reducens (strain ATCC BAA-1160 / DSM 100696 / MI-1) (Desulfotomaculum reducens).